The following is a 539-amino-acid chain: Glucans biosynthesis protein D (539 aa).

Positions 1–31 (MHRRNLLKASMALAAYTGLSASGLLAARAWA) form a signal peptide, tat-type signal.

Belongs to the OpgD/OpgG family. Predicted to be exported by the Tat system. The position of the signal peptide cleavage has not been experimentally proven.

Its subcellular location is the periplasm. It participates in glycan metabolism; osmoregulated periplasmic glucan (OPG) biosynthesis. In terms of biological role, probably involved in the control of the structural glucose backbone of osmoregulated periplasmic glucans (OPGs). In Pseudomonas fluorescens (strain ATCC BAA-477 / NRRL B-23932 / Pf-5), this protein is Glucans biosynthesis protein D.